The chain runs to 175 residues: NADH dehydrogenase [ubiquinone] iron-sulfur protein 4, mitochondrial (175 aa).

The transit peptide at Met1 to Leu42 directs the protein to the mitochondrion. Ser173 carries the post-translational modification Phosphoserine.

The protein belongs to the complex I NDUFS4 subunit family. This is a component of the iron-sulfur (IP) fragment of the enzyme. Interacts with BCAP31 and TOMM40; the interaction mediates its translocation to the mitochondria; the interaction with BCAP31 is direct.

The protein localises to the mitochondrion inner membrane. Its function is as follows. Accessory subunit of the mitochondrial membrane respiratory chain NADH dehydrogenase (Complex I), that is believed not to be involved in catalysis. Complex I functions in the transfer of electrons from NADH to the respiratory chain. The immediate electron acceptor for the enzyme is believed to be ubiquinone. The sequence is that of NADH dehydrogenase [ubiquinone] iron-sulfur protein 4, mitochondrial (Ndufs4) from Mus musculus (Mouse).